The following is a 158-amino-acid chain: Transcription elongation factor GreA (158 aa).

Belongs to the GreA/GreB family.

Necessary for efficient RNA polymerase transcription elongation past template-encoded arresting sites. The arresting sites in DNA have the property of trapping a certain fraction of elongating RNA polymerases that pass through, resulting in locked ternary complexes. Cleavage of the nascent transcript by cleavage factors such as GreA or GreB allows the resumption of elongation from the new 3'terminus. GreA releases sequences of 2 to 3 nucleotides. This Sinorhizobium medicae (strain WSM419) (Ensifer medicae) protein is Transcription elongation factor GreA.